The chain runs to 408 residues: MPEPCLLMQCESSPKEEEIPSLFWGLDPVFLAFAKLYIKDILEMKESQQVPGMYFYNGHPIRRVDIMGAVISVKERETFYSYGVDDATGVINCVCWKRPSNAESSSDPAILSTSRELSMTSQLKKLQETIEQKTKIGIGDIIRVRGYVRMFREEREICATIYYKVDDPVWNMQIARMLELPELYKKVYDQPFRNPALKEEEALNSKDTLDLAGLTALLSEKVKEFLQEKKVQSFYQKELEMVEPLQSLASQPVTHSTCSDQVELKNDAASDIHSVFKNALHLLQEKGFVFQRDGGSDKLYYVTSKDKDLHQKIYQIIKEDCQKPNLWCMLPQEAWRGTEEGLAVVVTLSVCLPLPVDVEKGCHLMHVLNCVLLNLRWDLNKAVLQQVLELLEDQSDIVSTGDHYYTAF.

Residues 8–195 (MQCESSPKEE…KVYDQPFRNP (188 aa)) are interaction with CTC1. A DNA-binding region (OB) is located at residues 64–165 (VDIMGAVISV…EICATIYYKV (102 aa)). Winged helix-turn-helix (wHTH) stretches follow at residues 201-304 (EALN…YVTS) and 305-408 (KDKD…YTAF).

It belongs to the STN1 family. In terms of assembly, component of the CST complex, composed of TEN1/C17orf106, CTC1/C17orf68 and STN1; in the complex interacts directly with TEN1 and CTC1. Interacts with ACD/TPP1, POT1 and POLA1.

The protein localises to the nucleus. The protein resides in the chromosome. It is found in the telomere. Its function is as follows. Component of the CST complex proposed to act as a specialized replication factor promoting DNA replication under conditions of replication stress or natural replication barriers such as the telomere duplex. The CST complex binds single-stranded DNA with high affinity in a sequence-independent manner, while isolated subunits bind DNA with low affinity by themselves. Initially the CST complex has been proposed to protect telomeres from DNA degradation. However, the CST complex has been shown to be involved in several aspects of telomere replication. The CST complex inhibits telomerase and is involved in telomere length homeostasis; it is proposed to bind to newly telomerase-synthesized 3' overhangs and to terminate telomerase action implicating the association with the ACD:POT1 complex thus interfering with its telomerase stimulation activity. The CST complex is also proposed to be involved in fill-in synthesis of the telomeric C-strand probably implicating recruitment and activation of DNA polymerase alpha. The CST complex facilitates recovery from many forms of exogenous DNA damage; seems to be involved in the re-initiation of DNA replication at repaired forks and/or dormant origins. Required for efficicient replication of the duplex region of the telomere. Promotes efficient replication of lagging-strand telomeres. Promotes general replication start following replication-fork stalling implicating new origin firing. May be in involved in C-strand fill-in during late S/G2 phase independent of its role in telomere duplex replication. This chain is CST complex subunit STN1, found in Rattus norvegicus (Rat).